A 280-amino-acid polypeptide reads, in one-letter code: Shikimate kinase (280 aa).

86–96 provides a ligand contact to ATP; the sequence is PPGVGLKGSAA.

Belongs to the GHMP kinase family. Archaeal shikimate kinase subfamily.

Its subcellular location is the cytoplasm. The catalysed reaction is shikimate + ATP = 3-phosphoshikimate + ADP + H(+). Its pathway is metabolic intermediate biosynthesis; chorismate biosynthesis; chorismate from D-erythrose 4-phosphate and phosphoenolpyruvate: step 5/7. The chain is Shikimate kinase (aroK) from Aeropyrum pernix (strain ATCC 700893 / DSM 11879 / JCM 9820 / NBRC 100138 / K1).